The sequence spans 130 residues: MPATNILANLFVTLYNNETRRKGECTILPTSKLGIEVLKTLQKDGYIGEFEHIDDKRGGKFKIKLLAKITKCGAISPRFKVKTDEFNNWEQQYLPAYDRGMLLVTTNQGVMSHHEATQKGIGGFLIGYVY.

This sequence belongs to the universal ribosomal protein uS8 family. In terms of assembly, part of the 30S ribosomal subunit.

One of the primary rRNA binding proteins, it binds directly to 16S rRNA central domain where it helps coordinate assembly of the platform of the 30S subunit. This chain is Small ribosomal subunit protein uS8, found in Nitrosopumilus maritimus (strain SCM1).